Consider the following 225-residue polypeptide: Insulin-induced gene 2 protein (225 aa).

Residues 1 to 28 (MAEGETKSPGPKKCGPYISSVTSQSVNL) lie on the Cytoplasmic side of the membrane. The chain crosses the membrane as a helical span at residues 29 to 51 (MIRGVVLFFIGVFLALVLNLLQI). Topologically, residues 52 to 70 (QRNVTLFPPDVIASIFSSA) are lumenal. A helical transmembrane segment spans residues 71–88 (WWVPPCCGTASAVIGLLY). The Cytoplasmic portion of the chain corresponds to 89 to 103 (PCIDRHLGEPHKFKR). The chain crosses the membrane as a helical span at residues 104-126 (EWSSVMRCVAVFVGINHASAKVD). The Lumenal segment spans residues 127 to 129 (FDN). Residues 130–148 (NIQLSLTLAALSIGLWWTF) form a helical membrane-spanning segment. At 149-153 (DRSRS) the chain is on the cytoplasmic side. Ser151 is subject to Phosphoserine. A helical membrane pass occupies residues 154-175 (GFGLGVGIAFLATLVTQLLVYN). Over 176–189 (GVYQYTSPDFLYVR) the chain is Lumenal. A helical transmembrane segment spans residues 190-207 (SWLPCIFFAGGITMGNIG). Residues 208–225 (RQLAMYECKVIAEKSHQE) lie on the Cytoplasmic side of the membrane. Cysteine sulfenic acid (-SOH); alternate is present on Cys215. Cys215 is covalently cross-linked (Glycyl cysteine thioester (Cys-Gly) (interchain with G-Cter in ubiquitin); alternate). The KxHxx signature appears at 219–225 (AEKSHQE).

It belongs to the INSIG family. In terms of assembly, interacts with SCAP; interaction is direct and only takes place in the presence of sterols; it prevents interaction between SCAP and the coat protein complex II (COPII). Associates with the SCAP-SREBP complex (composed of SCAP and SREBF1/SREBP1 or SREBF2/SREBP2); association is mediated via its interaction with SCAP and only takes place in the presence of sterols. Interacts with RNF139. Interacts with RNF145. In terms of processing, phosphorylation at Ser-151 by PCK1 reduces binding to oxysterol, disrupting the interaction between INSIG2 and SCAP, thereby promoting nuclear translocation of SREBP proteins (SREBF1/SREBP1 or SREBF2/SREBP2) and subsequent transcription of downstream lipogenesis-related genes. Polyubiquitinated by AMFR/gp78 at Cys-215 in some tissues such as adipose tissues, undifferentiated myoblasts and liver, leading to its degradation. In differentiated myotubes, Cys-215 oxidation prevents ubiquitination at the same site, resulting in protein stabilization. Post-translationally, oxidized at Cys-215 in differentiated myotubes, preventing ubiquitination at the same site, and resulting in protein stabilization.

Its subcellular location is the endoplasmic reticulum membrane. In terms of biological role, oxysterol-binding protein that mediates feedback control of cholesterol synthesis by controlling both endoplasmic reticulum to Golgi transport of SCAP and degradation of HMGCR. Acts as a negative regulator of cholesterol biosynthesis by mediating the retention of the SCAP-SREBP complex in the endoplasmic reticulum, thereby blocking the processing of sterol regulatory element-binding proteins (SREBPs) SREBF1/SREBP1 and SREBF2/SREBP2. Binds oxysterol, including 22-hydroxycholesterol, 24-hydroxycholesterol, 25-hydroxycholesterol and 27-hydroxycholesterol, regulating interaction with SCAP and retention of the SCAP-SREBP complex in the endoplasmic reticulum. In presence of oxysterol, interacts with SCAP, retaining the SCAP-SREBP complex in the endoplasmic reticulum, thereby preventing SCAP from escorting SREBF1/SREBP1 and SREBF2/SREBP2 to the Golgi. Sterol deprivation or phosphorylation by PCK1 reduce oxysterol-binding, disrupting the interaction between INSIG2 and SCAP, thereby promoting Golgi transport of the SCAP-SREBP complex, followed by processing and nuclear translocation of SREBF1/SREBP1 and SREBF2/SREBP2. Also regulates cholesterol synthesis by regulating degradation of HMGCR: initiates the sterol-mediated ubiquitin-mediated endoplasmic reticulum-associated degradation (ERAD) of HMGCR via recruitment of the reductase to the ubiquitin ligase RNF139. This chain is Insulin-induced gene 2 protein, found in Sus scrofa (Pig).